A 1020-amino-acid chain; its full sequence is MKLQVRVVEARNLPAMDLNGFSDPYVRLQLGKQRSRTKVVKKNLNPKWTEDFSFGVDDLNDELVVSVLDEDKYFNDDFVGQVRVSVSLVFDAENQSLGTVWYPLNPKKKGSKKDCGEILLKICFSQKNSVLDLTSSGDQTSASRSPDLRLESPIDPSTCASPSRSDDASSIPQTTFAGRFTQIFQKNAITATPTQSSSRSIDASDLSEISKPVFSLELSEDESSSTSFEELLKAMESKDQGSEPPSNLSGGVVVDQLFMISPSDLNIVLFASDSSFYASLTELQGTTEVQIGPWKAENDGESVKRVVSYLKAATKLIKAVKGTEEQTYLKADGEVYAVLASVATPDVPFGGTFKVEVLYCISPGPELPSGEQCSRLVVSWRLNFLQSTMMRGMIENGARQGLKDNFEQYANLLAQSVKPVDSKDIGLNKEQALSSLQAEPQSDWKLAVQYFANFTVLSTFLIGIYVFVHIVFAIPSAIQGLEFNGLDLPDSIGEFVVSGVLVLQCERVLQLISRFMQARKQKGSDHGIKAHGDGWLLTVALIEGVDLAAVDPSGHCDPYIVFTSNGKTRTSSIKFQKSNPQWNEIFEFDAMADPPSVLNVEVFDFDGPFDEAVSLGHAEVNFVRSNISDLADVWVPLQGKLAQACQSKLHLRIFLDHTGGGDVVRDYLNKMEKEVGKKINVRSPQTNSAFQKLFGLPQEEFLINDFTCHLKRKMPLQGRLFLSARIVGFYASIFGNKTKFFFLWEDIEEIQVLPPTLASMGSPIVVMTLRPNRGLDARIGAKTHDEEGRLKFHFHSFVSFNVAQKTIMALWKAKSLTPEQKVQAVEEESEQKLQSEESGLFLGVDDVRFSEVFSLTLPVPVSFFMELFGGGEVDRKAMERAGCQSYSCSPWESEKDDVYERQTYYRDKRISRYRGEVTSTQQKSLVPEKNGWLVEEVMTLHGVPLGDYFNLHLRYQMEESTSKPKTTYVRVYFGIEWLKSTRHQKRVTKNILVNLQDRLKMTFGFLEKEYSSRQQQQQVT.

A C2 1 domain is found at methionine 1 to tyrosine 102. Ca(2+) contacts are provided by aspartate 17, aspartate 23, aspartate 69, aspartate 71, and aspartate 77. Polar residues-rich tracts occupy residues threonine 134–arginine 144 and threonine 158–proline 172. The interval threonine 134–proline 172 is disordered. The VASt 1 domain occupies serine 249–aspartate 421. A helical membrane pass occupies residues phenylalanine 454–isoleucine 474. In terms of domain architecture, C2 2 spans glutamine 517 to valine 635. Aspartate 551, aspartate 557, aspartate 604, phenylalanine 605, and aspartate 606 together coordinate Ca(2+). A GRAM domain is found at alanine 689 to valine 752. Positions arginine 848–tyrosine 1010 constitute a VASt 2 domain.

Ca(2+) is required as a cofactor.

It localises to the membrane. The chain is C2 and GRAM domain-containing protein At1g03370 from Arabidopsis thaliana (Mouse-ear cress).